Here is a 170-residue protein sequence, read N- to C-terminus: Transcriptional repressor NrdR (170 aa).

The segment at 3 to 34 is a zinc-finger region; it reads CPFCRHPDSRVVDSRTSEDGSSIRRRRQCPEC. In terms of domain architecture, ATP-cone spans 46–136; the sequence is LSVVKRSGVA…VYRGFSSLED (91 aa). Residues 148 to 170 form a disordered region; sequence RENEGDPDADGSADAPVRLTTSV.

Belongs to the NrdR family. The cofactor is Zn(2+).

Functionally, negatively regulates transcription of bacterial ribonucleotide reductase nrd genes and operons by binding to NrdR-boxes. In Beutenbergia cavernae (strain ATCC BAA-8 / DSM 12333 / CCUG 43141 / JCM 11478 / NBRC 16432 / NCIMB 13614 / HKI 0122), this protein is Transcriptional repressor NrdR.